The following is a 200-amino-acid chain: Formate dehydrogenase iron-sulfur subunit (200 aa).

3 consecutive 4Fe-4S ferredoxin-type domains span residues 7–37 (VKFY…VGVN), 50–81 (GKEK…VRAD), and 82–111 (GIVL…FPKS). The [4Fe-4S] cluster site is built by C16, C19, C22, C26, C59, C62, C67, C71, C91, C94, C97, C101, C123, C126, C155, and C159.

Formate dehydrogenase is a membrane-bound complex, formed of at least three different subunits. [4Fe-4S] cluster serves as cofactor.

Its function is as follows. This chain is an electron transfer unit containing 18 cysteine residues, 16 of which occur in four clusters. In Wolinella succinogenes (strain ATCC 29543 / DSM 1740 / CCUG 13145 / JCM 31913 / LMG 7466 / NCTC 11488 / FDC 602W) (Vibrio succinogenes), this protein is Formate dehydrogenase iron-sulfur subunit (fdhB1).